Reading from the N-terminus, the 1124-residue chain is MTSSGKIRIYELSKDLGLENKDVLHAAEKLSIAAKSHSSSISDDEAKRIRGLLRQGSAANSAPPSKSEPGKTILSVKKAAPTAIKDVAPPMRKATSSSEISQVKPSAPANPTPTSPERLSRESVAHPAPPTRPVNPTTTPTSSPPKTAARPVNAPISRPATPSRPSAPTPRSANKPSSPVPPSTGSKDPRAGQTSTSSKATTVSGGGPRPKIISRPQSPAAPGRSAPPAKPSIPSDRKAPKPELVGRPKPKRPVVAPPSRPEPEGQRPDKKRPGISPRPIGGPNQRANTPQRPGAPIRQGKTRPGQPRSAGNTLELVGKPIRRDRSDAGSAGRDSNNRPGAPTRPGMPAGMRKPVAPGELMQLQKPTGRPGTPPPRRPDGTSVGTRGGSEGATPPVERPASPTAPKRPGHRPAQAPAAGAPRRPGRPDWDDSAKLEALRNKSPQKQRQKVHIIGENDDALTAETSGYAGEQQAVVLTASLARPAKPKSQKKPASKPVAALRKRKKETTRQRQRRRAMELRAAREAKQVRPEMLIVPEANLTVQELADMLSIESSEIIKSLFFKGITATVTQSLDLPTIEAVAEEFGVPVLQDDIEEAAKKTTEMIEETDLAHLIRRPPVVTVMGHVDHGKTSLLDAIRKARVAAVEAGGITQHIGAYQVEIDHGGQPRKITFLDTPGHQAFTAMRARGTKVTDIAVLVVAADDGVRPQTLEAISHARAAKVPIIVAINKTDKEGASPERVKQELSDQNLLSEEWGGDVVMVPVSAIKGENIDKLLEMILLVTEVEDLQANPDRLAKGTVIEAHLDKAKGPVATLLIQNGTLKTGDVLAAGPVLGKVRAMVDDSGARLKQAGPADAVEALGFSEVPTAGDEFEVYPDEKSARAVVGERASDARATRLAQQMASRRVSLAAMSGQASDGELKELNLILKADVQGSVEAILGSLEQLPKDEVQVRVLLSAPGEITETDVDLAAASGAVIVGFNTSMASGAKRAADATGVDVRDYDVIYKLLEDIQMAMEGLLEPELVEESLGEAEVRAVFTIGKSAVAGCYITTGKLQRNCRVRVRRAKQVVFEGDLDSLRRNKDDVKEVATGFECGIGCDRFANWEERDIIEAHKLVTKRRTLSSS.

The segment covering 32 to 41 (IAAKSHSSSI) has biased composition (low complexity). 2 disordered regions span residues 32–451 (IAAK…QKVH) and 480–523 (LARP…RAAR). Residues 94-104 (ATSSSEISQVK) are compositionally biased toward polar residues. Positions 134 to 173 (VNPTTTPTSSPPKTAARPVNAPISRPATPSRPSAPTPRSA) are enriched in low complexity. Polar residues predominate over residues 192-203 (GQTSTSSKATTV). The span at 214–227 (SRPQSPAAPGRSAP) shows a compositional bias: low complexity. Basic and acidic residues-rich tracts occupy residues 235–246 (SDRKAPKPELVG) and 261–272 (PEPEGQRPDKKR). 2 stretches are compositionally biased toward low complexity: residues 274 to 283 (GISPRPIGGP) and 411 to 422 (RPAQAPAAGAPR). The span at 425–439 (GRPDWDDSAKLEALR) shows a compositional bias: basic and acidic residues. 2 stretches are compositionally biased toward basic residues: residues 484-493 (AKPKSQKKPA) and 500-514 (LRKR…RQRR). The tr-type G domain occupies 615–787 (RRPPVVTVMG…ILLVTEVEDL (173 aa)). Positions 624–631 (GHVDHGKT) are G1. 624-631 (GHVDHGKT) is a binding site for GTP. The G2 stretch occupies residues 649-653 (GITQH). A G3 region spans residues 674–677 (DTPG). Residues 674–678 (DTPGH) and 728–731 (NKTD) contribute to the GTP site. Positions 728–731 (NKTD) are G4. The interval 764–766 (SAI) is G5.

It belongs to the TRAFAC class translation factor GTPase superfamily. Classic translation factor GTPase family. IF-2 subfamily.

Its subcellular location is the cytoplasm. Its function is as follows. One of the essential components for the initiation of protein synthesis. Protects formylmethionyl-tRNA from spontaneous hydrolysis and promotes its binding to the 30S ribosomal subunits. Also involved in the hydrolysis of GTP during the formation of the 70S ribosomal complex. This chain is Translation initiation factor IF-2, found in Prochlorococcus marinus (strain MIT 9303).